The chain runs to 733 residues: Lanosterol synthase (733 aa).

The residue at position 2 (Thr2) is an N-acetylthreonine. One copy of the PFTB 1 repeat lies at 125 to 166 (REEMVRYLRSVQLPDGGWGLHIEDKSTVFGTALNYVALRILG). The active-site Proton donor is the Asp456. PFTB repeat units follow at residues 484–529 (LCDA…MIDY), 561–601 (LNQG…ACMG), and 613–654 (VAQA…HSTC).

It belongs to the terpene cyclase/mutase family. In terms of assembly, monomer.

The protein resides in the endoplasmic reticulum membrane. The catalysed reaction is (S)-2,3-epoxysqualene = lanosterol. It participates in terpene metabolism; lanosterol biosynthesis; lanosterol from farnesyl diphosphate: step 3/3. Its function is as follows. Key enzyme in the cholesterol biosynthesis pathway. Catalyzes the cyclization of (S)-2,3 oxidosqualene to lanosterol, a reaction that forms the sterol nucleus. Through the production of lanosterol may regulate lens protein aggregation and increase transparency. This chain is Lanosterol synthase, found in Mus musculus (Mouse).